A 265-amino-acid chain; its full sequence is Undecaprenyl-diphosphatase (265 aa).

Transmembrane regions (helical) follow at residues 41–61 (IAYT…LIYF), 75–95 (LKFL…LYVI), 104–124 (YNPS…GIYI), 137–157 (LSTK…LPGV), 180–200 (YSYL…LLFT), 215–235 (GIAL…GFLL), and 244–264 (YLID…GLII).

This sequence belongs to the UppP family.

The protein resides in the cell membrane. The enzyme catalyses di-trans,octa-cis-undecaprenyl diphosphate + H2O = di-trans,octa-cis-undecaprenyl phosphate + phosphate + H(+). Catalyzes the dephosphorylation of undecaprenyl diphosphate (UPP). This chain is Undecaprenyl-diphosphatase, found in Saccharolobus islandicus (strain Y.N.15.51 / Yellowstone #2) (Sulfolobus islandicus).